The primary structure comprises 316 residues: Protoheme IX farnesyltransferase (316 aa).

The next 8 membrane-spanning stretches (helical) occupy residues 35 to 55 (VMVLVIFTALVGMVVSQGHVQ), 56 to 76 (PAIGAISLLAIAVGAGASGCL), 119 to 139 (VVLGLAANLLAAALLAFTIVF), 156 to 176 (IVIGGAAGALPPVIGQAVVTG), 183 to 203 (LILFAIIFIWTPPHFWALALI), 229 to 246 (IVWYSLLLAPLGLVPVAL), 250 to 272 (GLVYAVVGLVGGLGMVAFSIRVL), and 283 to 303 (AAMGMFGFSILYLFALFSALL).

It belongs to the UbiA prenyltransferase family. Protoheme IX farnesyltransferase subfamily.

Its subcellular location is the cell inner membrane. The enzyme catalyses heme b + (2E,6E)-farnesyl diphosphate + H2O = Fe(II)-heme o + diphosphate. Its pathway is porphyrin-containing compound metabolism; heme O biosynthesis; heme O from protoheme: step 1/1. Functionally, converts heme B (protoheme IX) to heme O by substitution of the vinyl group on carbon 2 of heme B porphyrin ring with a hydroxyethyl farnesyl side group. The chain is Protoheme IX farnesyltransferase from Methylobacterium radiotolerans (strain ATCC 27329 / DSM 1819 / JCM 2831 / NBRC 15690 / NCIMB 10815 / 0-1).